The chain runs to 203 residues: Interferon type B (203 aa).

A signal peptide spans 1–27; that stretch reads MTANHQSPGMHSILLLLLLPALTTTFS. Cystine bridges form between cysteine 28-cysteine 125 and cysteine 57-cysteine 164. Residues asparagine 37 and asparagine 160 are each glycosylated (N-linked (GlcNAc...) asparagine).

This sequence belongs to the alpha/beta interferon family.

The protein resides in the secreted. In terms of biological role, has antiviral activities. In Gallus gallus (Chicken), this protein is Interferon type B (IFNB).